The primary structure comprises 362 residues: MKNFETMAEQYKTLPCVGQLNDGLLRELKNLCRFTDFPGIRLLTERHRNECLSLIWPKNLWLRLAQPVDVAGYSEQQLAELNDHYQGFKENLCLIGAIQIGRKDVPIFVGKSSRIFCHDLEDDVLYYIAEDFDKFVRFGILGTNVITCSEPVYTRFYYDGPKFEKLETLKDLGLLQEPLNLNSSLRFNRKTALALKALRRNYISMLSELDELARCKTLAEIEHFVSINTGLKLRLETPIFTALILQDRKNIHCGTSDQKRFEEQEALFEKVVVLGFLNISAEDYGLRPILCIGETGAIYYYDWIDKVLTRIADCLLTFARIGFARYCGDFGYDKIGKVTARFGRLSTLGSAPVQQYSWYLSK.

This sequence belongs to the herpesviridae US22 family.

The chain is Protein U8 (U8) from Human herpesvirus 7 (strain JI) (HHV-7).